We begin with the raw amino-acid sequence, 55 residues long: ATP synthase F(0) complex subunit 8 (55 aa).

Residues 4–24 (LNPSPWLLILLFSWLIFLTML) traverse the membrane as a helical segment. Residues 36–55 (MPSTQNMCKQEPEPWTWPWA) form a disordered region.

Belongs to the ATPase protein 8 family. In terms of assembly, component of the ATP synthase complex composed at least of ATP5F1A/subunit alpha, ATP5F1B/subunit beta, ATP5MC1/subunit c (homooctomer), MT-ATP6/subunit a, MT-ATP8/subunit 8, ATP5ME/subunit e, ATP5MF/subunit f, ATP5MG/subunit g, ATP5MK/subunit k, ATP5MJ/subunit j, ATP5F1C/subunit gamma, ATP5F1D/subunit delta, ATP5F1E/subunit epsilon, ATP5PF/subunit F6, ATP5PB/subunit b, ATP5PD/subunit d, ATP5PO/subunit OSCP. ATP synthase complex consists of a soluble F(1) head domain (subunits alpha(3) and beta(3)) - the catalytic core - and a membrane F(0) domain - the membrane proton channel (subunits c, a, 8, e, f, g, k and j). These two domains are linked by a central stalk (subunits gamma, delta, and epsilon) rotating inside the F1 region and a stationary peripheral stalk (subunits F6, b, d, and OSCP).

The protein localises to the mitochondrion membrane. In terms of biological role, subunit 8, of the mitochondrial membrane ATP synthase complex (F(1)F(0) ATP synthase or Complex V) that produces ATP from ADP in the presence of a proton gradient across the membrane which is generated by electron transport complexes of the respiratory chain. ATP synthase complex consist of a soluble F(1) head domain - the catalytic core - and a membrane F(1) domain - the membrane proton channel. These two domains are linked by a central stalk rotating inside the F(1) region and a stationary peripheral stalk. During catalysis, ATP synthesis in the catalytic domain of F(1) is coupled via a rotary mechanism of the central stalk subunits to proton translocation. In vivo, can only synthesize ATP although its ATP hydrolase activity can be activated artificially in vitro. Part of the complex F(0) domain. The protein is ATP synthase F(0) complex subunit 8 of Latimeria chalumnae (Coelacanth).